The primary structure comprises 373 residues: Quinolinate synthase (373 aa).

Residues His-46 and Ser-63 each coordinate iminosuccinate. A [4Fe-4S] cluster-binding site is contributed by Cys-109. Residues Tyr-142 to Asn-144 and Ser-163 each bind iminosuccinate. Cys-232 lines the [4Fe-4S] cluster pocket. Iminosuccinate is bound by residues His-258–Glu-260 and Thr-275. A [4Fe-4S] cluster-binding site is contributed by Cys-324.

It belongs to the quinolinate synthase family. Type 3 subfamily. It depends on [4Fe-4S] cluster as a cofactor.

The protein resides in the cytoplasm. It carries out the reaction iminosuccinate + dihydroxyacetone phosphate = quinolinate + phosphate + 2 H2O + H(+). Its pathway is cofactor biosynthesis; NAD(+) biosynthesis; quinolinate from iminoaspartate: step 1/1. Functionally, catalyzes the condensation of iminoaspartate with dihydroxyacetone phosphate to form quinolinate. The chain is Quinolinate synthase from Acidobacterium capsulatum (strain ATCC 51196 / DSM 11244 / BCRC 80197 / JCM 7670 / NBRC 15755 / NCIMB 13165 / 161).